The sequence spans 141 residues: Hemoglobin subunit alpha-A (141 aa).

Positions 1–141 (VLSAADKNNV…VGNVLTAKYR (141 aa)) constitute a Globin domain. His-58 contacts O2. His-87 provides a ligand contact to heme b.

Belongs to the globin family. As to quaternary structure, heterotetramer of two alpha chains and two beta chains. In terms of tissue distribution, red blood cells.

Its function is as follows. Involved in oxygen transport from the lung to the various peripheral tissues. In Francolinus pondicerianus (Grey francolin), this protein is Hemoglobin subunit alpha-A (HBAA).